Reading from the N-terminus, the 325-residue chain is Replication factor C small subunit (325 aa).

45 to 52 is an ATP binding site; it reads GPPGTGKT.

This sequence belongs to the activator 1 small subunits family. RfcS subfamily. In terms of assembly, heteromultimer composed of small subunits (RfcS) and large subunits (RfcL).

Its function is as follows. Part of the RFC clamp loader complex which loads the PCNA sliding clamp onto DNA. The polypeptide is Replication factor C small subunit (Sulfolobus acidocaldarius (strain ATCC 33909 / DSM 639 / JCM 8929 / NBRC 15157 / NCIMB 11770)).